Reading from the N-terminus, the 555-residue chain is CTP synthase (555 aa).

Residues 1-271 (MVKRGKKTKY…DDKLAELFNI (271 aa)) form an amidoligase domain region. Ser-19 serves as a coordination point for CTP. Residue Ser-19 coordinates UTP. ATP-binding positions include 20–25 (SLGKGL) and Asp-77. Residues Asp-77 and Glu-145 each contribute to the Mg(2+) site. CTP contacts are provided by residues 152-154 (DIE), 192-197 (KTKPTQ), and Lys-228. UTP contacts are provided by residues 192 to 197 (KTKPTQ) and Lys-228. One can recognise a Glutamine amidotransferase type-1 domain in the interval 297 to 538 (RVGVVGKYVE…VHAAREQRDQ (242 aa)). Gly-358 contributes to the L-glutamine binding site. Cys-385 serves as the catalytic Nucleophile; for glutamine hydrolysis. L-glutamine contacts are provided by residues 386–389 (LGLQ), Glu-409, and Arg-466. Catalysis depends on residues His-511 and Glu-513.

The protein belongs to the CTP synthase family. As to quaternary structure, homotetramer.

The enzyme catalyses UTP + L-glutamine + ATP + H2O = CTP + L-glutamate + ADP + phosphate + 2 H(+). The catalysed reaction is L-glutamine + H2O = L-glutamate + NH4(+). It catalyses the reaction UTP + NH4(+) + ATP = CTP + ADP + phosphate + 2 H(+). It functions in the pathway pyrimidine metabolism; CTP biosynthesis via de novo pathway; CTP from UDP: step 2/2. With respect to regulation, allosterically activated by GTP, when glutamine is the substrate; GTP has no effect on the reaction when ammonia is the substrate. The allosteric effector GTP functions by stabilizing the protein conformation that binds the tetrahedral intermediate(s) formed during glutamine hydrolysis. Inhibited by the product CTP, via allosteric rather than competitive inhibition. In terms of biological role, catalyzes the ATP-dependent amination of UTP to CTP with either L-glutamine or ammonia as the source of nitrogen. Regulates intracellular CTP levels through interactions with the four ribonucleotide triphosphates. The polypeptide is CTP synthase (Anaeromyxobacter sp. (strain Fw109-5)).